Here is a 1273-residue protein sequence, read N- to C-terminus: Receptor-type tyrosine-protein phosphatase C (1273 aa).

The signal sequence occupies residues Met-1 to Gly-23. Residues Gln-24–Lys-546 lie on the Extracellular side of the membrane. Residues Leu-45–Pro-192 form a disordered region. Polar residues-rich tracts occupy residues Thr-50–Leu-77, Gln-84–Ala-111, and Arg-141–Pro-192. Asn-62 carries N-linked (GlcNAc...) asparagine glycosylation. Asn-142, Asn-153, Asn-164, Asn-178, Asn-200, Asn-245, Asn-250, Asn-271, Asn-282, Asn-327, Asn-333, Asn-371, Asn-374, Asn-471, and Asn-502 each carry an N-linked (GlcNAc...) asparagine glycan. Fibronectin type-III domains lie at Pro-361 to Ala-452 and Arg-453 to Ser-545. Residues Ala-547–Leu-567 traverse the membrane as a helical segment. The Cytoplasmic portion of the chain corresponds to Tyr-568–Ser-1273. Tyrosine-protein phosphatase domains follow at residues Phe-622 to Tyr-881 and Leu-913 to Ile-1196. The residue at position 652 (Tyr-652) is a Phosphotyrosine. Residues Asp-790, Cys-822–Arg-828, and Gln-866 contribute to the substrate site. Cys-822 functions as the Phosphocysteine intermediate in the catalytic mechanism. Ser-944, Ser-963, Ser-966, Ser-970, Ser-973, Ser-974, and Ser-978 each carry phosphoserine. The disordered stretch occupies residues Leu-960–Ser-984. Residues Ala-968 to Glu-981 show a composition bias toward acidic residues. Cys-1137 functions as the Phosphocysteine intermediate in the catalytic mechanism. Phosphoserine is present on residues Ser-1209 and Ser-1266. The tract at residues Val-1219–Ser-1273 is disordered.

The protein belongs to the protein-tyrosine phosphatase family. Receptor class 1/6 subfamily. As to quaternary structure, interacts with SKAP1. Interacts with DPP4; the interaction is enhanced in an interleukin-12-dependent manner in activated lymphocytes. Binds GANAB and PRKCSH. Interacts with CD53; this interaction stabilizes PTPRC on the membrane and is required for optimal phosphatase activity. Interacts with CLEC10A. In terms of processing, heavily N- and O-glycosylated. The cytoplasmic domain contains potential phosphorylation sites. As to expression, isoform 1 and isoform 2 are found in thymocyte and lymph node. Isoform 4 and isoform 3 are found in the lymph nod.

The protein localises to the cell membrane. It localises to the membrane raft. Its subcellular location is the synapse. It catalyses the reaction O-phospho-L-tyrosyl-[protein] + H2O = L-tyrosyl-[protein] + phosphate. Functionally, protein tyrosine-protein phosphatase required for T-cell activation through the antigen receptor. Acts as a positive regulator of T-cell coactivation upon binding to DPP4. The first PTPase domain has enzymatic activity, while the second one seems to affect the substrate specificity of the first one. Upon T-cell activation, recruits and dephosphorylates SKAP1 and FYN. Dephosphorylates LYN, and thereby modulates LYN activity. Interacts with CLEC10A at antigen presenting cell-T cell contact; CLEC10A on immature dendritic cells recognizes Tn antigen-carrying PTPRC/CD45 receptor on effector T cells and modulates T cell activation threshold to limit autoreactivity. In Rattus norvegicus (Rat), this protein is Receptor-type tyrosine-protein phosphatase C (Ptprc).